Reading from the N-terminus, the 543-residue chain is Chaperonin GroEL (543 aa).

ATP contacts are provided by residues 29 to 32 (TLGP), 86 to 90 (DGTTT), Gly-413, 478 to 480 (DAL), and Asp-494. Positions 524–543 (PEPEAPAVPAGMPGGMGGMY) are disordered.

This sequence belongs to the chaperonin (HSP60) family. As to quaternary structure, forms a cylinder of 14 subunits composed of two heptameric rings stacked back-to-back. Interacts with the co-chaperonin GroES.

The protein localises to the cytoplasm. The enzyme catalyses ATP + H2O + a folded polypeptide = ADP + phosphate + an unfolded polypeptide.. Its function is as follows. Together with its co-chaperonin GroES, plays an essential role in assisting protein folding. The GroEL-GroES system forms a nano-cage that allows encapsulation of the non-native substrate proteins and provides a physical environment optimized to promote and accelerate protein folding. This is Chaperonin GroEL from Ruminiclostridium cellulolyticum (strain ATCC 35319 / DSM 5812 / JCM 6584 / H10) (Clostridium cellulolyticum).